The following is a 410-amino-acid chain: 26S proteasome non-ATPase regulatory subunit 6 (410 aa).

The PCI domain maps to 207–382 (DFAGAADLFL…GVIEVNHRDS (176 aa)).

Belongs to the proteasome subunit S10 family. As to expression, expressed in multiple tissues including the intestine, pharynx and hypodermis.

Acts as a regulatory subunit of the 26S proteasome which is involved in the ATP-dependent degradation of ubiquitinated proteins. The chain is 26S proteasome non-ATPase regulatory subunit 6 (rpn-7) from Caenorhabditis elegans.